Reading from the N-terminus, the 313-residue chain is Ribosomal RNA small subunit methyltransferase H (313 aa).

Residues 35–37 (GGH), D55, F79, D101, and Q108 contribute to the S-adenosyl-L-methionine site.

This sequence belongs to the methyltransferase superfamily. RsmH family.

It localises to the cytoplasm. The enzyme catalyses cytidine(1402) in 16S rRNA + S-adenosyl-L-methionine = N(4)-methylcytidine(1402) in 16S rRNA + S-adenosyl-L-homocysteine + H(+). Functionally, specifically methylates the N4 position of cytidine in position 1402 (C1402) of 16S rRNA. The sequence is that of Ribosomal RNA small subunit methyltransferase H from Salmonella typhi.